We begin with the raw amino-acid sequence, 212 residues long: High frequency lysogenization protein HflD homolog (212 aa).

It belongs to the HflD family.

The protein localises to the cytoplasm. It is found in the cell inner membrane. This Pectobacterium carotovorum subsp. carotovorum (strain PC1) protein is High frequency lysogenization protein HflD homolog.